The primary structure comprises 286 residues: 2-dehydro-3-deoxyphosphooctonate aldolase (286 aa).

Belongs to the KdsA family.

It localises to the cytoplasm. It catalyses the reaction D-arabinose 5-phosphate + phosphoenolpyruvate + H2O = 3-deoxy-alpha-D-manno-2-octulosonate-8-phosphate + phosphate. The protein operates within carbohydrate biosynthesis; 3-deoxy-D-manno-octulosonate biosynthesis; 3-deoxy-D-manno-octulosonate from D-ribulose 5-phosphate: step 2/3. It functions in the pathway bacterial outer membrane biogenesis; lipopolysaccharide biosynthesis. The protein is 2-dehydro-3-deoxyphosphooctonate aldolase of Bradyrhizobium sp. (strain BTAi1 / ATCC BAA-1182).